The sequence spans 278 residues: Large ribosomal subunit protein uL2c (278 aa).

The segment at 224-256 (NPVDHPHGGGEGRAPIGRKKPTTPWGYPALGRK) is disordered.

Belongs to the universal ribosomal protein uL2 family. In terms of assembly, part of the 50S ribosomal subunit.

The protein resides in the plastid. This is Large ribosomal subunit protein uL2c (rpl2) from Cuscuta exaltata (Tall dodder).